The sequence spans 164 residues: Large ribosomal subunit protein bL9 (164 aa).

It belongs to the bacterial ribosomal protein bL9 family.

In terms of biological role, binds to the 23S rRNA. The polypeptide is Large ribosomal subunit protein bL9 (Borrelia recurrentis (strain A1)).